Reading from the N-terminus, the 474-residue chain is Glutathione synthetase (474 aa).

Alanine 2 is subject to N-acetylalanine. Arginine 125 lines the substrate pocket. Glutamate 144 is a binding site for ATP. Residues glutamate 144 and asparagine 146 each coordinate Mg(2+). Substrate is bound by residues 148 to 151, 214 to 216, glutamine 220, and 267 to 270; these read ISAS, ERN, and RDGY. Residues lysine 305, 364 to 373, tyrosine 375, and 398 to 401 contribute to the ATP site; these read KPQREGGGNN and MEKI. Glutamate 368 serves as a coordination point for Mg(2+). Serine 415 bears the Phosphoserine mark. Glutamate 425 contributes to the ATP binding site. Position 450 (arginine 450) interacts with substrate. Lysine 452 and aspartate 458 together coordinate ATP. Substrate is bound at residue 461-462; the sequence is VA.

This sequence belongs to the eukaryotic GSH synthase family. As to quaternary structure, homodimer. The cofactor is Mg(2+).

It carries out the reaction gamma-L-glutamyl-L-cysteine + glycine + ATP = glutathione + ADP + phosphate + H(+). The catalysed reaction is gamma-L-glutamyl-(2S)-2-aminobutanoate + glycine + ATP = ophthalmate + ADP + phosphate + H(+). It functions in the pathway sulfur metabolism; glutathione biosynthesis; glutathione from L-cysteine and L-glutamate: step 2/2. Its function is as follows. Catalyzes the production of glutathione from gamma-glutamylcysteine and glycine in an ATP-dependent manner. Glutathione (gamma-glutamylcysteinylglycine, GSH) is the most abundant intracellular thiol in living aerobic cells and is required for numerous processes including the protection of cells against oxidative damage, amino acid transport, the detoxification of foreign compounds, the maintenance of protein sulfhydryl groups in a reduced state and acts as a cofactor for a number of enzymes. Participates in ophthalmate biosynthesis in hepatocytes. This is Glutathione synthetase from Rattus norvegicus (Rat).